Here is a 240-residue protein sequence, read N- to C-terminus: tRNA (guanine-N(1)-)-methyltransferase (240 aa).

S-adenosyl-L-methionine is bound by residues Gly-110 and 129-134; that span reads LGDFVL.

It belongs to the RNA methyltransferase TrmD family. In terms of assembly, homodimer.

The protein resides in the cytoplasm. The catalysed reaction is guanosine(37) in tRNA + S-adenosyl-L-methionine = N(1)-methylguanosine(37) in tRNA + S-adenosyl-L-homocysteine + H(+). In terms of biological role, specifically methylates guanosine-37 in various tRNAs. The protein is tRNA (guanine-N(1)-)-methyltransferase of Clostridium botulinum (strain Loch Maree / Type A3).